A 420-amino-acid polypeptide reads, in one-letter code: 3-isopropylmalate dehydratase large subunit (420 aa).

Residues Cys-300, Cys-360, and Cys-363 each contribute to the [4Fe-4S] cluster site.

It belongs to the aconitase/IPM isomerase family. LeuC type 2 subfamily. In terms of assembly, heterodimer of LeuC and LeuD. Requires [4Fe-4S] cluster as cofactor.

The catalysed reaction is (2R,3S)-3-isopropylmalate = (2S)-2-isopropylmalate. It participates in amino-acid biosynthesis; L-leucine biosynthesis; L-leucine from 3-methyl-2-oxobutanoate: step 2/4. Its function is as follows. Catalyzes the isomerization between 2-isopropylmalate and 3-isopropylmalate, via the formation of 2-isopropylmaleate. The chain is 3-isopropylmalate dehydratase large subunit from Heliobacterium modesticaldum (strain ATCC 51547 / Ice1).